The primary structure comprises 548 residues: Probable aquaglyceroporin-4 (548 aa).

Positions 1-22 (MAGTQDQSQDYFSKPTTPSTPG) are enriched in polar residues. Disordered regions lie at residues 1–63 (MAGT…LPST), 76–101 (SRGFSRVSSEGTASRPTAPQHSSHFH), and 158–270 (KEET…ESGD). Residues 1 to 290 (MAGTQDQSQD…ARLRARHPEP (290 aa)) lie on the Cytoplasmic side of the membrane. The segment covering 38-48 (PDRESGTERAK) has biased composition (basic and acidic residues). 2 stretches are compositionally biased toward polar residues: residues 77-97 (RGFSRVSSEGTASRPTAPQHS) and 171-200 (SRTTSGQPYRVETQSSLPSRDIQRQQSRTT). Residues 249–265 (PDFKVDGEPLGHQEKPC) show a composition bias toward basic and acidic residues. The helical transmembrane segment at 291-311 (LAEFLATAVAIFLGLTGTLSV) threads the bilayer. A glycan (N-linked (GlcNAc...) asparagine) is linked at asparagine 312. Residues 312–327 (NLSATQSQPYGTYETS) are Extracellular-facing. Residues 328–348 (CWAWGFAWMFGIYLGGGVSGA) form a helical membrane-spanning segment. Residues 349–369 (HMNPAISVSLSIFRGFPWRQC) lie on the Cytoplasmic side of the membrane. The NPA 1 signature appears at 351–353 (NPA). Residues 370-390 (VIYVFVQFIASIVAGALAYAM) traverse the membrane as a helical segment. Residues 391-420 (YADSINHVDPDMTKMSMTFFSTPREWVTLK) are Extracellular-facing. A helical membrane pass occupies residues 421 to 441 (SAFFNQVVGSAIMMIAVFALG). Residues 442 to 448 (DDQNNPP) are Cytoplasmic-facing. A helical membrane pass occupies residues 449–469 (GAGMHALVLGFLVTTLKFTLG). The Extracellular portion of the chain corresponds to 470–508 (YNIGSALNPASDFGPRVIAYAVGFRGDNVFHSGWWFYGP). Positions 477–479 (NPA) match the NPA 2 motif. A helical membrane pass occupies residues 509-529 (WAATLIGSLLGCTLYDGFVFV). Residues 530–548 (GSESPVNFRVDKRVKKLFN) are Cytoplasmic-facing.

It belongs to the MIP/aquaporin (TC 1.A.8) family.

The protein resides in the membrane. It catalyses the reaction H2O(in) = H2O(out). It carries out the reaction glycerol(in) = glycerol(out). Probable water/glycerol channel that may have redundant functions with FgAQP2. This Gibberella zeae (strain ATCC MYA-4620 / CBS 123657 / FGSC 9075 / NRRL 31084 / PH-1) (Wheat head blight fungus) protein is Probable aquaglyceroporin-4.